A 286-amino-acid polypeptide reads, in one-letter code: 2-hydroxy-6-oxo-6-phenylhexa-2,4-dienoate hydrolase (286 aa).

Substrate-binding positions include glycine 42–glycine 43, asparagine 51, asparagine 111, serine 180, and arginine 190. Catalysis depends on histidine 265, which acts as the Proton acceptor. Tryptophan 266 provides a ligand contact to substrate.

The protein belongs to the AB hydrolase superfamily. BphD family. Homodimer.

The enzyme catalyses 2,6-dioxo-6-phenylhexa-3-enoate + H2O = 2-oxopent-4-enoate + benzoate + H(+). It participates in xenobiotic degradation; biphenyl degradation; 2-hydroxy-2,4-pentadienoate and benzoate from biphenyl: step 4/4. In terms of biological role, catalyzes an unusual C-C bond hydrolysis of 2-hydroxy-6-oxo-6-phenylhexa-2,4-dienoic acid (HOPDA) to produce benzoic acid and 2-hydroxy-2,4-pentadienoic acid (HPD). This is 2-hydroxy-6-oxo-6-phenylhexa-2,4-dienoate hydrolase from Polaromonas naphthalenivorans (strain CJ2).